We begin with the raw amino-acid sequence, 347 residues long: GMP reductase (347 aa).

Position 108 to 131 (108 to 131) interacts with NADP(+); the sequence is ADFQKTKDIMALTDDLIFICIDIA. Positions 181 and 183 each coordinate K(+). Cys186 (thioimidate intermediate) is an active-site residue. 216 to 239 lines the NADP(+) pocket; that stretch reads IIGDGGCSCAGDVSKAFGGGADFV.

This sequence belongs to the IMPDH/GMPR family. GuaC type 1 subfamily. As to quaternary structure, homotetramer.

It catalyses the reaction IMP + NH4(+) + NADP(+) = GMP + NADPH + 2 H(+). Catalyzes the irreversible NADPH-dependent deamination of GMP to IMP. It functions in the conversion of nucleobase, nucleoside and nucleotide derivatives of G to A nucleotides, and in maintaining the intracellular balance of A and G nucleotides. This chain is GMP reductase, found in Aliivibrio fischeri (strain ATCC 700601 / ES114) (Vibrio fischeri).